The primary structure comprises 141 residues: Methylglyoxal synthase (141 aa).

The MGS-like domain maps to 1-141 (MNIALIAHDK…PKLQKNKSDK (141 aa)). Substrate-binding positions include H8, K12, and 34-37 (TGTT). D60 acts as the Proton donor/acceptor in catalysis. Position 87 (H87) interacts with substrate.

It belongs to the methylglyoxal synthase family.

The enzyme catalyses dihydroxyacetone phosphate = methylglyoxal + phosphate. In terms of biological role, catalyzes the formation of methylglyoxal from dihydroxyacetone phosphate. The chain is Methylglyoxal synthase from Caldicellulosiruptor bescii (strain ATCC BAA-1888 / DSM 6725 / KCTC 15123 / Z-1320) (Anaerocellum thermophilum).